We begin with the raw amino-acid sequence, 100 residues long: Aspartyl/glutamyl-tRNA(Asn/Gln) amidotransferase subunit C (100 aa).

The protein belongs to the GatC family. As to quaternary structure, heterotrimer of A, B and C subunits.

It catalyses the reaction L-glutamyl-tRNA(Gln) + L-glutamine + ATP + H2O = L-glutaminyl-tRNA(Gln) + L-glutamate + ADP + phosphate + H(+). The enzyme catalyses L-aspartyl-tRNA(Asn) + L-glutamine + ATP + H2O = L-asparaginyl-tRNA(Asn) + L-glutamate + ADP + phosphate + 2 H(+). Its function is as follows. Allows the formation of correctly charged Asn-tRNA(Asn) or Gln-tRNA(Gln) through the transamidation of misacylated Asp-tRNA(Asn) or Glu-tRNA(Gln) in organisms which lack either or both of asparaginyl-tRNA or glutaminyl-tRNA synthetases. The reaction takes place in the presence of glutamine and ATP through an activated phospho-Asp-tRNA(Asn) or phospho-Glu-tRNA(Gln). In Janthinobacterium sp. (strain Marseille) (Minibacterium massiliensis), this protein is Aspartyl/glutamyl-tRNA(Asn/Gln) amidotransferase subunit C.